We begin with the raw amino-acid sequence, 488 residues long: NADH-quinone oxidoreductase subunit N 2 (488 aa).

14 helical membrane passes run 18 to 38 (FLPE…ELFI), 45 to 65 (LVLN…LLIP), 81 to 101 (PLAV…LPFA), 110 to 130 (SFYG…FVLA), 135 to 155 (LIIL…LTAL), 169 to 189 (YLIL…FMYI), 210 to 230 (LVLG…AVPF), 242 to 262 (PTPV…IPLV), 274 to 294 (LVWT…GNLV), 308 to 328 (SSIA…VIGM), 331 to 351 (VIYF…VLAL), 375 to 395 (IAFA…TVGF), 412 to 434 (WLAF…LVVV), and 458 to 478 (FALT…WFLI).

It belongs to the complex I subunit 2 family. As to quaternary structure, NDH-1 is composed of 14 different subunits. Subunits NuoA, H, J, K, L, M, N constitute the membrane sector of the complex.

The protein resides in the cell inner membrane. It catalyses the reaction a quinone + NADH + 5 H(+)(in) = a quinol + NAD(+) + 4 H(+)(out). NDH-1 shuttles electrons from NADH, via FMN and iron-sulfur (Fe-S) centers, to quinones in the respiratory chain. The immediate electron acceptor for the enzyme in this species is believed to be ubiquinone. Couples the redox reaction to proton translocation (for every two electrons transferred, four hydrogen ions are translocated across the cytoplasmic membrane), and thus conserves the redox energy in a proton gradient. In Aquifex aeolicus (strain VF5), this protein is NADH-quinone oxidoreductase subunit N 2.